A 527-amino-acid polypeptide reads, in one-letter code: DUF21 domain-containing protein At1g47330 (527 aa).

The Extracellular portion of the chain corresponds to Met-1–Tyr-15. One can recognise a CNNM transmembrane domain in the interval Cys-8 to Glu-191. A helical membrane pass occupies residues Val-16–Leu-36. The Cytoplasmic portion of the chain corresponds to Met-37 to His-70. The chain crosses the membrane as a helical span at residues Leu-71–Leu-91. Residues Asp-92 to Lys-93 are Extracellular-facing. The helical transmembrane segment at Ile-94–Ile-114 threads the bilayer. Over Met-115–Lys-126 the chain is Cytoplasmic. Residues Val-127–Tyr-147 form a helical membrane-spanning segment. Topologically, residues Pro-148 to Leu-527 are extracellular. CBS domains follow at residues Met-210–Leu-271, Met-274–Glu-334, and Lys-366–Glu-435. Disordered stretches follow at residues Lys-307–Leu-335, Glu-358–Ala-384, and Ile-464–Leu-527. Ser-315 is modified (phosphoserine). A compositionally biased stretch (basic and acidic residues) spans Glu-358–Asn-369. Residues Ile-464–Ser-501 show a composition bias toward low complexity. Asn-475 carries an N-linked (GlcNAc...) asparagine glycan. The segment covering Val-502 to Ser-515 has biased composition (polar residues). Residues Pro-518–Leu-527 show a composition bias toward basic and acidic residues.

Its subcellular location is the membrane. This Arabidopsis thaliana (Mouse-ear cress) protein is DUF21 domain-containing protein At1g47330 (CBSDUF7).